Reading from the N-terminus, the 986-residue chain is Ephrin type-A receptor 4-A (986 aa).

A signal peptide spans 1–20; it reads MAGIVHGILFCGLFGLCWAV. Topologically, residues 21–547 are extracellular; it reads TGSRIYPASE…MIGEGASPTV (527 aa). An Eph LBD domain is found at 30–209; that stretch reads EVTLLDSRSV…FYKKCPLTVR (180 aa). Fibronectin type-III domains are found at residues 328-438 and 439-536; these read PPSA…TNQA and APST…TVPS. Residues asparagine 340 and asparagine 407 are each glycosylated (N-linked (GlcNAc...) asparagine). Residues 548–569 form a helical membrane-spanning segment; the sequence is LLVSVAGSIVLVVILIAAFVIS. Residues 570 to 986 lie on the Cytoplasmic side of the membrane; the sequence is RRRSKYSKAK…QQIQGRMVPV (417 aa). Phosphotyrosine; by autocatalysis occurs at positions 595 and 601. Positions 620–881 constitute a Protein kinase domain; the sequence is IKIEKVIGVG…QIVSMLDKLI (262 aa). ATP contacts are provided by residues 626–634 and lysine 652; that span reads IGVGEFGEV. Aspartate 745 functions as the Proton acceptor in the catalytic mechanism. Phosphotyrosine; by autocatalysis occurs at positions 778 and 928. The region spanning 911–975 is the SAM domain; sequence SQVASVLDWL…LSSVQGMRTQ (65 aa). The PDZ-binding signature appears at 984–986; the sequence is VPV.

The protein belongs to the protein kinase superfamily. Tyr protein kinase family. Ephrin receptor subfamily.

It is found in the cell membrane. The protein resides in the early endosome. The catalysed reaction is L-tyrosyl-[protein] + ATP = O-phospho-L-tyrosyl-[protein] + ADP + H(+). Its function is as follows. Receptor tyrosine kinase which binds membrane-bound ephrin family ligands residing on adjacent cells, leading to contact-dependent bidirectional signaling into neighboring cells. The signaling pathway downstream of the receptor is referred to as forward signaling while the signaling pathway downstream of the ephrin ligand is referred to as reverse signaling. Highly promiscuous, it has the unique property among Eph receptors to bind and to be physiologically activated by both GPI-anchored ephrin-A and transmembrane ephrin-B ligands including EFNA1 and EFNB3. Upon activation by ephrin ligands, modulates cell morphology and integrin-dependent cell adhesion through regulation of the Rac, Rap and Rho GTPases activity. Plays an important role in the development of the nervous system controlling different steps of axonal guidance including the establishment of the corticospinal projections. This is Ephrin type-A receptor 4-A (epha4-a) from Xenopus laevis (African clawed frog).